We begin with the raw amino-acid sequence, 144 residues long: Large ribosomal subunit protein uL15 (144 aa).

Residues Met1–Leu57 form a disordered region. Positions Arg21–Ala31 are enriched in gly residues.

Belongs to the universal ribosomal protein uL15 family. Part of the 50S ribosomal subunit.

In terms of biological role, binds to the 23S rRNA. This chain is Large ribosomal subunit protein uL15, found in Paraburkholderia xenovorans (strain LB400).